Reading from the N-terminus, the 228-residue chain is Phosphoribosylformylglycinamidine synthase subunit PurQ (228 aa).

The 224-residue stretch at 3–226 (FAVIVFPGSN…VNYWRETHVV (224 aa)) folds into the Glutamine amidotransferase type-1 domain. The active-site Nucleophile is the Cys86. Active-site residues include His195 and Glu197.

Part of the FGAM synthase complex composed of 1 PurL, 1 PurQ and 2 PurS subunits.

The protein localises to the cytoplasm. The catalysed reaction is N(2)-formyl-N(1)-(5-phospho-beta-D-ribosyl)glycinamide + L-glutamine + ATP + H2O = 2-formamido-N(1)-(5-O-phospho-beta-D-ribosyl)acetamidine + L-glutamate + ADP + phosphate + H(+). It catalyses the reaction L-glutamine + H2O = L-glutamate + NH4(+). Its pathway is purine metabolism; IMP biosynthesis via de novo pathway; 5-amino-1-(5-phospho-D-ribosyl)imidazole from N(2)-formyl-N(1)-(5-phospho-D-ribosyl)glycinamide: step 1/2. In terms of biological role, part of the phosphoribosylformylglycinamidine synthase complex involved in the purines biosynthetic pathway. Catalyzes the ATP-dependent conversion of formylglycinamide ribonucleotide (FGAR) and glutamine to yield formylglycinamidine ribonucleotide (FGAM) and glutamate. The FGAM synthase complex is composed of three subunits. PurQ produces an ammonia molecule by converting glutamine to glutamate. PurL transfers the ammonia molecule to FGAR to form FGAM in an ATP-dependent manner. PurS interacts with PurQ and PurL and is thought to assist in the transfer of the ammonia molecule from PurQ to PurL. The chain is Phosphoribosylformylglycinamidine synthase subunit PurQ from Geobacillus thermodenitrificans (strain NG80-2).